Consider the following 1883-residue polypeptide: MSQVPVASPASWSSVASAAAAAVSAATSASSSLAASVDEPAATTATAATASYADERNPLIALFDGLLRVVLASLNLIRILATFSTITVPSLVYAILHYSLTLQLNFPSLALLFLTSLISAFIWLRYRHLNKYERLREVPITRDEGFNLNPDVASPGGDNDRGSFHNYLDDFLQAIRIFGFLEKPVFHELARHLQTRRLVAGDSLSLDTDFSFYIVIDGHVQVYAPLPSATASAVGQDSVEDEDDSGYQLLNEVESGGTLSSLFTILSLFTEDVKLSFDDHDDPHLAPPHPAYPAMDRLNNSSAANHLGRGNNATAPTSPYSSAFNPPSQTAAQLQLNAAALRNVPAAISTEGAVERLGGSAAVRSTSKSSHARTASSGTASATVQDGDTSTIMDPLEQNDDGVTSSLYHAPDLQMPPAQAAAPFSHFAPSYHPSPAGTPISSLPGSTHSPYFRGRATSIHALHEAAGGPNTPGSILSAMSSSAHGHYHPQADYLPRQGAGTVARATVDTTLAVIPAEAFKRLTKKFPNAAAHIVQVILARLSRVTFHTAHKYLGLTKEVMRTEKSINDLACFPLPSEFYEKGGMDKLRHRFLPQPNSKRETTVDDDYFRDFQEWTSISQRSSTPVPGSKDDTKDAATSSPPKVRIASDLPSLTTSSKQSNQKPTSSRISAARTPWGHPDPPLKTPTARNMVGPGDLLSMASLSQDGWYTTGFDMHSAQPTPRAKPRSVSKLEPFHGPLPHPVDDSTDGTSPLSGASPIPIRKGSSTMYHQGEAIGTDRPFANIGLPHFDIKNEVMDCIAKSIGLAQAAHSPLAPSYQASPHINAQDSLLQRSVFKSAFGSLSMLDAAMAEEESSITGTNSSMAGHGHSGFHPSDFENEVEIKFFPAGSTLVKAGESRAGLFYVIDGFLDVLLPAEANELEEEDRLKPNMNHKSAKTDASSGSSRQNRPGSHRKDSSSASLRAGLLDERNLREADVSLPQRRGTEADRISSNGDGNSGSVHRPAMREGSSSSTSYGTPAGLRKKPTESAKVGNALDGTGGAGSSSRRKPSHVSSGSGATTMPRHPDATNSNMAFTAKQPVLHPSLHQQQPLRGKPSQQSSQRSKDGKRSIFTVGRGGIAGYLSSLLGTASYVDITAKTDVYVGFLPAHALERIMERRPIVLLTLCKRLLSLLPPLILHIDSSLDWQQVNAGQVIYREDDPSDSFFIVINGRLRAITEKTNGIEVHNEYGQGDSVGELDVITNSRRRTTLHAIRDSELAKMPSTLFNAISVRHPAITIQISRIIARRVRTELVRSKQEGAALGAPIPGLPDLGRNNLNLKTVAIVPVTRQVPVIDFAAKLQTAFDDTIGGRAIFLDQSSVMGVLGRHAFSRMGKLKLAGWLADLEQKYRLVVYVVDTPVSSAWSQTSIRQADCVLMVGFGDEPAMGEYERLLMSVKTTARKELVLLHPERSVPPGSTREWLKNRPWVHAHHHVEMPGLTGSHAGAAISTGGDPKAVKALRNLKQKLETSLQRYRKTMTPLSASGRPHHASDFARLARRLCGMSIGLVLGGGGARGCAHLGVIRALEERGIPIDMVGGTSIGSLVGGLYAREAEMVSTFGRAKRFAGRMASLWRFASDLTYPVVSYTTGHEFNRGVFKAIQETHIEDMWIPFFCNTTNITWSRMEVHTSGYAWRYIRGSMTLAGLIPPLVDEGNMLVDGGYVDNLPVTVMLAMGARSVFAVDVGSIDDTSPRAYGDTLSGWWVLLNRWNPWSDASKIPSIPDIQGRLTYVSSVKTLEEAKKVKGCFYMRMPVEEFGTLAFGRFDMIYEKGYKAAVELLDGWDAEGKLPSGTEREDFEDDWEDGDEYEEYEVYTDDESGVGGGVRKIRKKRRRTRRKAGISARRNSI.

The Cytoplasmic segment spans residues 1–75 (MSQVPVASPA…LLRVVLASLN (75 aa)). Residues 76-96 (LIRILATFSTITVPSLVYAIL) form a helical membrane-spanning segment. Over 97–103 (HYSLTLQ) the chain is Lumenal. The chain crosses the membrane as a helical span at residues 104–124 (LNFPSLALLFLTSLISAFIWL). The Cytoplasmic segment spans residues 125–1883 (RYRHLNKYER…AGISARRNSI (1759 aa)). 6 disordered regions span residues 284-327 (HLAP…FNPP), 355-410 (ERLG…LYHA), 618-693 (SQRS…MVGP), 716-764 (SAQP…RKGS), 921-1069 (EEDR…ATNS), and 1084-1108 (LHQQ…GKRS). The segment covering 311 to 327 (NNATAPTSPYSSAFNPP) has biased composition (polar residues). Over residues 372 to 383 (ARTASSGTASAT) the composition is skewed to low complexity. Over residues 650 to 668 (PSLTTSSKQSNQKPTSSRI) the composition is skewed to polar residues. A nucleoside 3',5'-cyclic phosphate-binding positions include 863–1158 (AGHG…RRPI) and 1166–1285 (RLLS…IARR). A compositionally biased stretch (polar residues) spans 936-948 (TDASSGSSRQNRP). Residues 964–974 (LLDERNLREAD) show a composition bias toward basic and acidic residues. Composition is skewed to polar residues over residues 988 to 998 (ISSNGDGNSGS) and 1084 to 1100 (LHQQ…QSSQ). A PNPLA domain is found at 1544–1708 (LVLGGGGARG…VDNLPVTVML (165 aa)). Residues 1548 to 1553 (GGGARG) carry the GXGXXG motif. Positions 1575–1579 (GTSIG) match the GXSXG motif. Residue Ser-1577 is the Nucleophile of the active site. Asp-1695 serves as the catalytic Proton acceptor. The short motif at 1695-1697 (DGG) is the DGA/G element. The interval 1852 to 1883 (DESGVGGGVRKIRKKRRRTRRKAGISARRNSI) is disordered. A compositionally biased stretch (basic residues) spans 1861–1874 (RKIRKKRRRTRRKA).

It belongs to the NTE family.

It localises to the endoplasmic reticulum membrane. The enzyme catalyses a 1-acyl-sn-glycero-3-phosphocholine + H2O = sn-glycerol 3-phosphocholine + a fatty acid + H(+). Its activity is regulated as follows. Inhibited by organophosphorus esters. Functionally, intracellular phospholipase B that catalyzes the double deacylation of phosphatidylcholine (PC) to glycerophosphocholine (GroPCho). Plays an important role in membrane lipid homeostasis. Responsible for the rapid PC turnover in response to inositol, elevated temperatures, or when choline is present in the growth medium. The protein is Lysophospholipase NTE1 (NTE1) of Mycosarcoma maydis (Corn smut fungus).